The chain runs to 334 residues: MCEENVHVSEDVAGSHGSFTNARPRLIVLIRHGESESNKNKEVNGYIPNHLISLTKTGQIQARQAGIDLLRVLNVDDHNLVEDLAKKYIKDESSRRTLPLKDYTRLSREKDTNIVFYTSPYRRARETLKGILDVIDEYNELNSGVRICEDMRYDPHGKQKHAFWPRGLNNTGGVYENNEDNICEGKPGKCYLQYRVKDEPRIREQDFGNFQKINSMQDVMKKRSTYGHFFFRFPHGESAADVYDRVASFQETLFRHFHDRQERRPRDVVVLVTHGIYSRVFLMKWFRWTYEEFESFTNVPNGSVMVMELDESINRYVLRTVLPKWTDCEGDLTT.

The active-site Tele-phosphohistidine intermediate is the His-32. Residues Asn-38, 44-45 (NG), and Arg-108 each bind substrate. The active-site Proton donor/acceptor is Glu-126. Residues 168–171 (LNNT) and 195–205 (RVKDEPRIREQ) contribute to the substrate site. Ser-248 bears the Phosphoserine mark.

Belongs to the phosphoglycerate mutase family.

It localises to the cytoplasm. Its subcellular location is the nucleus. In terms of biological role, metal-independent, broad-range acid phosphatase. Involved, either directly or indirectly, in the bidirectional transport of sterols between the endoplasmic reticulum and the plasma membrane. The polypeptide is Broad-range acid phosphatase DET1 (DET1) (Saccharomyces cerevisiae (strain ATCC 204508 / S288c) (Baker's yeast)).